A 248-amino-acid polypeptide reads, in one-letter code: Sperm-specific protein Don juan (248 aa).

Residues 82 to 147 (KEGNQDELEN…EKKTKCAKKD (66 aa)) are a coiled coil. The segment at 146-200 (KDPCKKKDPCKKKDPCKKKDPCKKKDPCKKKDPCKKKDPCKKKDPCKKKGGDLKK) is disordered. 8 repeat units span residues 147–152 (DPCKKK), 153–158 (DPCKKK), 159–164 (DPCKKK), 165–170 (DPCKKK), 171–176 (DPCKKK), 177–182 (DPCKKK), 183–188 (DPCKKK), and 189–194 (DPCKKK). The tract at residues 147–194 (DPCKKKDPCKKKDPCKKKDPCKKKDPCKKKDPCKKKDPCKKKDPCKKK) is 8 X 6 AA tandem repeat of D-P-C-K-K-K. Positions 197–244 (DLKKKCKKLAEKEKCKKLAKKEKMKKLQKKCKKMAQKEKCKKMAKKDK) form a coiled coil.

In terms of tissue distribution, expression limited to post-meiotic male germ cells. Expressed in elongated spermatids during individualization and in finally elongated nuclei of spermatids. After completion of nuclear shaping it is no longer expressed in the sperm heads with the onset of individualization.

The protein resides in the nucleus. It is found in the mitochondrion. Functionally, may be involved in the final steps of mitochondrial differentiation within the flagellum. In Drosophila melanogaster (Fruit fly), this protein is Sperm-specific protein Don juan (dj).